A 506-amino-acid polypeptide reads, in one-letter code: Maturase K (506 aa).

The protein belongs to the intron maturase 2 family. MatK subfamily.

Its subcellular location is the plastid. The protein resides in the chloroplast. Usually encoded in the trnK tRNA gene intron. Probably assists in splicing its own and other chloroplast group II introns. The chain is Maturase K from Trifolium microcephalum (Small-head clover).